Consider the following 174-residue polypeptide: Chorion class CB protein M5H4 (174 aa).

The N-terminal stretch at 1-20 (MTTIVVLICASALFVQLAFS) is a signal peptide. The tract at residues 21-71 (QCLGRDPVIGFGGAYGSGWGGYDAISPYDGLGYGVPYSAGFIGLSPSNLAA) is left arm. A central domain region spans residues 72–142 (SCGGALAVNS…GDGAIGIVSE (71 aa)). The right arm stretch occupies residues 143–174 (APIVAPASIGYGQWPVNAGYKGIGPCGCGGLY).

It belongs to the chorion protein family.

Functionally, this protein is one of many from the eggshell of the silk moth. This is Chorion class CB protein M5H4 from Bombyx mori (Silk moth).